A 108-amino-acid chain; its full sequence is uncharacterized protein (108 aa).

The segment covering 1–10 (MSGISLTPVK) has biased composition (polar residues). 2 disordered regions span residues 1-63 (MSGI…RPPR) and 83-108 (VLSP…PRTQ). Residues 33-62 (YVDRARPSADAKEHCAASDPEEWHSGDRPP) show a composition bias toward basic and acidic residues.

This is an uncharacterized protein from Gallid herpesvirus 2 (strain Chicken/Md5/ATCC VR-987) (GaHV-2).